The following is a 475-amino-acid chain: MNFKTTIGLEVHIELKTNSKIFSPSPVEFGDQPNANTNVIDWGYPGVLPQTNKGVVEAGMMAAKALHANITRTQHFDRKNYFYPDNPKAYQVTQADTPIGTDGWIEIEVEGKKKKVGIAEMHIEEDAGKNSHNPNGYSYVDLNRQGTPLIEIVSKPDIESPDEAYAYLEALRQRIQFTGISDVKMEEGSMRVDVNISIRPLGSEKFGTKAELKNINSFNFVRKGLAFEEKRQQKILLAGGQVRPETRRYDEATGQTILMRVKEGAEDYRYFPEPDLPSITIDDEWIKDVEDKMPEMPGKRRARYVEELGLTDYDAMVLTQTKEMSDFFEATVAQGADPKLTANYLMGDVNAYLNDQKVDLQETKLTPEHLASMVKMITDETISSKMAKKVFKAITQGEEPTSWVKAKGLVQLSDPAVLKPMIVEIVDNNEQSVADFKNGKDRAVGFLVGQIMKQTKGQANPKVVNKILMQELNSR.

Belongs to the GatB/GatE family. GatB subfamily. In terms of assembly, heterotrimer of A, B and C subunits.

The enzyme catalyses L-glutamyl-tRNA(Gln) + L-glutamine + ATP + H2O = L-glutaminyl-tRNA(Gln) + L-glutamate + ADP + phosphate + H(+). It catalyses the reaction L-aspartyl-tRNA(Asn) + L-glutamine + ATP + H2O = L-asparaginyl-tRNA(Asn) + L-glutamate + ADP + phosphate + 2 H(+). Functionally, allows the formation of correctly charged Asn-tRNA(Asn) or Gln-tRNA(Gln) through the transamidation of misacylated Asp-tRNA(Asn) or Glu-tRNA(Gln) in organisms which lack either or both of asparaginyl-tRNA or glutaminyl-tRNA synthetases. The reaction takes place in the presence of glutamine and ATP through an activated phospho-Asp-tRNA(Asn) or phospho-Glu-tRNA(Gln). This is Aspartyl/glutamyl-tRNA(Asn/Gln) amidotransferase subunit B from Pediococcus pentosaceus (strain ATCC 25745 / CCUG 21536 / LMG 10740 / 183-1w).